The sequence spans 321 residues: Glutaminase (321 aa).

Residues Ser-69, Asn-120, Glu-165, Asn-172, Tyr-196, Tyr-248, and Val-266 each coordinate substrate.

The protein belongs to the glutaminase family. As to quaternary structure, homotetramer.

It catalyses the reaction L-glutamine + H2O = L-glutamate + NH4(+). The chain is Glutaminase from Bacteroides fragilis (strain ATCC 25285 / DSM 2151 / CCUG 4856 / JCM 11019 / LMG 10263 / NCTC 9343 / Onslow / VPI 2553 / EN-2).